Consider the following 324-residue polypeptide: O-ureido-L-serine synthase (324 aa).

K43 carries the post-translational modification N6-(pyridoxal phosphate)lysine. Residues N73, 177 to 181 (GTTGT), and S265 each bind pyridoxal 5'-phosphate.

The protein belongs to the cysteine synthase/cystathionine beta-synthase family. Homotetramer. Pyridoxal 5'-phosphate is required as a cofactor.

The enzyme catalyses hydroxyurea + O-acetyl-L-serine = O-ureido-L-serine + acetate + H(+). It carries out the reaction O-acetyl-L-serine + hydrogen sulfide = L-cysteine + acetate. Its function is as follows. Involved in the biosynthesis of the antibiotic D-cycloserine (DCS), a cyclic structural analog of D-alanine, used as an antitubercular agent. Catalyzes the addition of hydroxyurea on O-acetyl-L-serine (OAS) to yield O-ureido-L-serine. It prefers sulfide as the second substrate, followed by hydroxyurea, L-homocysteine, and thiosulfate. The sequence is that of O-ureido-L-serine synthase from Streptomyces lavendulae.